The sequence spans 2090 residues: Ninein (2090 aa).

2 EF-hand domains span residues 8–43 (QHEA…LSLE) and 42–77 (LEEV…ILSR). Serine 152 bears the Phosphoserine mark. 2 EF-hand domains span residues 182-217 (WIEE…YGLQ) and 219-252 (VDGE…NGKS). 245 to 252 (GLFKNGKS) lines the GTP pocket. The residue at position 269 (serine 269) is a Phosphoserine. Position 300–304 (300–304 (DGMGH)) interacts with GTP. Residues 317–352 (EGIENSQEILKALDFSLDGNINLTELTLALENELLV) enclose the EF-hand 5 domain. Residues 357 to 570 (IHQAALASFK…YRAQGRVLRL (214 aa)) are a coiled coil. Residue 420 to 423 (RKLD) participates in GTP binding. A disordered region spans residues 574-595 (NSPSEEVEANSGGIEPEHGLGS). 4 coiled-coil regions span residues 625–1027 (LRLE…QATS), 1068–1099 (LSLQ…QKLE), 1181–1341 (SELE…SVVQ), and 1441–1816 (QDKH…AGGK). The interval 802–1505 (KMETECNRRT…HDLQITCSEM (704 aa)) is important for interaction with CEP170. Positions 1152–1190 (VRDLGSTGTSSVQRQEVKIEESEASVEGFSELENSEETR) are disordered. Phosphoserine is present on residues serine 1550 and serine 1837. Coiled-coil stretches lie at residues 1854–1885 (QENE…SNLL) and 1922–2067 (ANRK…QVSL).

In terms of assembly, homooligomer. Interacts with GSK3B/GSK3-beta via its C-terminal domain. Interacts with C14ORF166, such interaction may prevent its phosphorylation by GSK3B. Interacts with AUNIP (via N-terminus). Identified in a complex with AUNIP and AURKA. Interacts with CCDC120. Interacts (via C-terminus) with CEP250. Interacts with CEP170. Interacts with the gamma-tubulin ring complex component TUBGCP3. Interacts with gamma-tubulin. Isoform 6 does not interact with CEP170 or CEP250. In terms of processing, phosphorylated by AURKA/Aurora kinase A and PKA kinases but not CK2 or AURKB/ Aurora kinase B. As to expression, ubiquitous. Highly expressed in heart and skeletal muscle. Isoform 1 is more expressed than isoform 5.

It localises to the cytoplasm. The protein resides in the cytoskeleton. The protein localises to the microtubule organizing center. It is found in the centrosome. Its subcellular location is the centriole. Functionally, centrosomal protein required in the positioning and anchorage of the microtubule minus-end in epithelial cells. May also act as a centrosome maturation factor. May play a role in microtubule nucleation, by recruiting the gamma-tubulin ring complex to the centrosome. Overexpression does not perturb nucleation or elongation of microtubules but suppresses release of microtubules. Required for centriole organization and microtubule anchoring at the mother centriole. The protein is Ninein (NIN) of Homo sapiens (Human).